Reading from the N-terminus, the 379-residue chain is Forkhead box protein F1 (379 aa).

Positions 1-45 are disordered; the sequence is MSSAPEKQQPPHGGGGGGGGGGGAAMDPASSGPSKAKKTNAGIRR. A compositionally biased stretch (gly residues) spans 12-24; that stretch reads HGGGGGGGGGGGA. Residues 47-138 constitute a DNA-binding region (fork-head); it reads EKPPYSYIAL…EFMFEEGSFR (92 aa).

In terms of tissue distribution, expressed in lung and placenta.

Its subcellular location is the nucleus. Probable transcription activator for a number of lung-specific genes. The sequence is that of Forkhead box protein F1 (FOXF1) from Homo sapiens (Human).